A 1091-amino-acid polypeptide reads, in one-letter code: TATA element modulatory factor (1091 aa).

Disordered regions lie at residues 42–86 (IPYG…KPVR) and 100–280 (FLSP…DAKS). A compositionally biased stretch (polar residues) spans 57-81 (WDTSTWGLNSTSSEPQSPPTASQAI). Phosphoserine occurs at positions 73, 78, 112, and 136. Low complexity-rich tracts occupy residues 111–122 (KSPVVSKPPSKS), 131–142 (SSLQESSSPGQS), and 194–211 (SENV…TTST). Ser-213 carries the phosphoserine modification. The span at 217–234 (ETKDMALEPKEQKHEDRQ) shows a compositional bias: basic and acidic residues. Low complexity-rich tracts occupy residues 242 to 253 (VSSFSSGTSTTS) and 264 to 273 (ISESSASSRQ). 6 positions are modified to phosphoserine: Ser-324, Ser-326, Ser-329, Ser-334, Ser-340, and Ser-357. The interaction with Elongin BC complex stretch occupies residues 329-338 (SLDSRSVSEI). Residues 360 to 443 (TPKTKVVEST…NQPKAPPEKE (84 aa)) are disordered. Residues 368-379 (STEENAEEEEGN) are compositionally biased toward acidic residues. Ser-411 and Ser-540 each carry phosphoserine. Coiled coils occupy residues 443-767 (EDVC…STAR) and 824-894 (IQMS…SQLE). Phosphoserine is present on residues Ser-923 and Ser-926. Thr-927 bears the Phosphothreonine mark. Ser-931 is subject to Phosphoserine. A coiled-coil region spans residues 984-1090 (IENLQSQLKL…QIDELLRQRL (107 aa)).

In terms of assembly, component of the SNF/SWI transcription factor complexes. Interacts with RAB6A. Interacts with TCEB1. Interacts with STAT3 and FER. Interacts with TRNP1; may regulate TRNP1 proteasomal degradation. Phosphorylated by FER.

The protein resides in the cytoplasm. Its subcellular location is the nucleus. The protein localises to the golgi apparatus membrane. Potential coactivator of the androgen receptor. May play critical roles in two RAB6-dependent retrograde transport processes: one from endosomes to the Golgi and the other from the Golgi to the ER. Mediates STAT3 degradation. This Mus musculus (Mouse) protein is TATA element modulatory factor (Tmf1).